Here is a 118-residue protein sequence, read N- to C-terminus: Probable FK506-binding protein (118 aa).

The 86-residue stretch at 33–118 (GGEVEVHYVG…LVFIIDLISA (86 aa)) folds into the PPIase FKBP-type domain.

This sequence belongs to the FKBP-type PPIase family.

The enzyme catalyses [protein]-peptidylproline (omega=180) = [protein]-peptidylproline (omega=0). In terms of biological role, PPIases accelerate the folding of proteins. The chain is Probable FK506-binding protein from Corynebacterium glutamicum (strain ATCC 13032 / DSM 20300 / JCM 1318 / BCRC 11384 / CCUG 27702 / LMG 3730 / NBRC 12168 / NCIMB 10025 / NRRL B-2784 / 534).